The chain runs to 40 residues: Photosystem II reaction center protein J (40 aa).

Residues 8 to 28 (IPLWLVGTVTGIPVIGLIGVF) form a helical membrane-spanning segment.

This sequence belongs to the PsbJ family. As to quaternary structure, PSII is composed of 1 copy each of membrane proteins PsbA, PsbB, PsbC, PsbD, PsbE, PsbF, PsbH, PsbI, PsbJ, PsbK, PsbL, PsbM, PsbT, PsbX, PsbY, PsbZ, Psb30/Ycf12, at least 3 peripheral proteins of the oxygen-evolving complex and a large number of cofactors. It forms dimeric complexes.

It is found in the plastid. Its subcellular location is the chloroplast thylakoid membrane. In terms of biological role, one of the components of the core complex of photosystem II (PSII). PSII is a light-driven water:plastoquinone oxidoreductase that uses light energy to abstract electrons from H(2)O, generating O(2) and a proton gradient subsequently used for ATP formation. It consists of a core antenna complex that captures photons, and an electron transfer chain that converts photonic excitation into a charge separation. This Musa acuminata (Banana) protein is Photosystem II reaction center protein J.